Consider the following 2412-residue polypeptide: Genome polyprotein 1 (2412 aa).

The interval Met-1 to Arg-23 is disordered. A Helicase ATP-binding domain is found at Ala-474–Glu-632. Residue Gly-487–Ser-494 coordinates ATP. Positions Gly-647–Phe-813 constitute a Helicase C-terminal domain. Tyr-1234 is subject to O-(5'-phospho-RNA)-tyrosine. One can recognise a Peptidase C4 domain in the interval Ile-1359–Phe-1574. Active-site for nuclear inclusion protein A activity residues include His-1404, Asp-1440, and Cys-1507. The region spanning Trp-1858 to Phe-1982 is the RdRp catalytic domain. Positions Pro-2178–Trp-2202 are disordered.

Belongs to the bymoviruses polyprotein 1 family. In terms of processing, VPg is uridylylated by the polymerase and is covalently attached to the 5'-end of the genomic RNA. This uridylylated form acts as a nucleotide-peptide primer for the polymerase. The viral RNA1 of bymoviruses is expressed as a single polyprotein which undergoes post-translational proteolytic processing by the main proteinase NIa-pro resulting in the production of at least eight individual proteins.

It is found in the host cytoplasmic vesicle. The protein localises to the virion. It carries out the reaction RNA(n) + a ribonucleoside 5'-triphosphate = RNA(n+1) + diphosphate. The enzyme catalyses Hydrolyzes glutaminyl bonds, and activity is further restricted by preferences for the amino acids in P6 - P1' that vary with the species of potyvirus, e.g. Glu-Xaa-Xaa-Tyr-Xaa-Gln-|-(Ser or Gly) for the enzyme from tobacco etch virus. The natural substrate is the viral polyprotein, but other proteins and oligopeptides containing the appropriate consensus sequence are also cleaved.. In terms of biological role, indispensable for virus replication. Functionally, mediates the cap-independent, EIF4E-dependent translation of viral genomic RNAs. Binds to the cap-binding site of host EIF4E and thus interferes with the host EIF4E-dependent mRNA export and translation. VPg-RNA directly binds EIF4E and is a template for transcription. Also forms trimeric complexes with EIF4E-EIF4G, which are templates for translation. Its function is as follows. Has RNA-binding and proteolytic activities. An RNA-dependent RNA polymerase that plays an essential role in the virus replication. The polypeptide is Genome polyprotein 1 (Hordeum vulgare (Barley)).